Reading from the N-terminus, the 316-residue chain is tRNA dimethylallyltransferase (316 aa).

9-16 contributes to the ATP binding site; it reads GPTASGKS. 11–16 is a substrate binding site; sequence TASGKS. 2 interaction with substrate tRNA regions span residues 34 to 37 and 158 to 162; these read DSMQ and QRLAR.

This sequence belongs to the IPP transferase family. Monomer. Mg(2+) serves as cofactor.

The catalysed reaction is adenosine(37) in tRNA + dimethylallyl diphosphate = N(6)-dimethylallyladenosine(37) in tRNA + diphosphate. Functionally, catalyzes the transfer of a dimethylallyl group onto the adenine at position 37 in tRNAs that read codons beginning with uridine, leading to the formation of N6-(dimethylallyl)adenosine (i(6)A). This Hyphomonas neptunium (strain ATCC 15444) protein is tRNA dimethylallyltransferase.